The primary structure comprises 412 residues: L-threonine:uridine-5'-aldehyde transaldolase (412 aa).

Position 229 is an N6-(pyridoxal phosphate)lysine (lysine 229).

It belongs to the SHMT family. Pyridoxal 5'-phosphate serves as cofactor.

It catalyses the reaction uridine-5'-aldehyde + L-threonine = (5'S,6'S)-C-glycyluridine + acetaldehyde. The protein operates within antibiotic biosynthesis. Transaldolase involved in the biosynthesis of the capuramycin-type nucleoside antibiotic A-102395. Catalyzes the condensation of L-threonine and uridine-5'-aldehyde to form 5'-C-glycyluridine (GlyU). The chain is L-threonine:uridine-5'-aldehyde transaldolase from Amycolatopsis sp.